Consider the following 260-residue polypeptide: Triosephosphate isomerase (260 aa).

Position 11–13 (11–13 (NWK)) interacts with substrate. Catalysis depends on histidine 103, which acts as the Electrophile. Glutamate 175 (proton acceptor) is an active-site residue. Substrate contacts are provided by residues glycine 181, serine 220, and 241 to 242 (GG).

The protein belongs to the triosephosphate isomerase family. In terms of assembly, homodimer.

Its subcellular location is the cytoplasm. It catalyses the reaction D-glyceraldehyde 3-phosphate = dihydroxyacetone phosphate. It functions in the pathway carbohydrate biosynthesis; gluconeogenesis. The protein operates within carbohydrate degradation; glycolysis; D-glyceraldehyde 3-phosphate from glycerone phosphate: step 1/1. In terms of biological role, involved in the gluconeogenesis. Catalyzes stereospecifically the conversion of dihydroxyacetone phosphate (DHAP) to D-glyceraldehyde-3-phosphate (G3P). In Shewanella denitrificans (strain OS217 / ATCC BAA-1090 / DSM 15013), this protein is Triosephosphate isomerase.